The primary structure comprises 91 residues: Co-chaperonin GroES (91 aa).

This sequence belongs to the GroES chaperonin family. In terms of assembly, heptamer of 7 subunits arranged in a ring. Interacts with the chaperonin GroEL.

Its subcellular location is the cytoplasm. Its function is as follows. Together with the chaperonin GroEL, plays an essential role in assisting protein folding. The GroEL-GroES system forms a nano-cage that allows encapsulation of the non-native substrate proteins and provides a physical environment optimized to promote and accelerate protein folding. GroES binds to the apical surface of the GroEL ring, thereby capping the opening of the GroEL channel. The protein is Co-chaperonin GroES of Oenococcus oeni (strain ATCC BAA-331 / PSU-1).